Here is a 92-residue protein sequence, read N- to C-terminus: Ig kappa chain V region 3381 (92 aa).

The segment at 1-23 (AFELTQTPASVEAAVGGTVTINC) is framework-1. A complementarity-determining-1 region spans residues 24-34 (QASESISNWLA). The tract at residues 35–49 (WYQQKPGQPXKLLIY) is framework-2. Positions 50 to 56 (KASTLAS) are complementarity-determining-2. The tract at residues 57–88 (GVSSRFKGSGSGTQFTLTISDLECADAATYYC) is framework-3. The complementarity-determining-3 stretch occupies residues 89–92 (QSTD).

In Oryctolagus cuniculus (Rabbit), this protein is Ig kappa chain V region 3381.